A 57-amino-acid chain; its full sequence is U-Asilidin(1)-Mar2a (57 aa).

Residues 1–24 (MAPLLKLNILLLIVLICFTFHANA) form the signal peptide. Intrachain disulfides connect Cys28/Cys44, Cys35/Cys48, and Cys43/Cys53.

It belongs to the asilidin-1 family. In terms of tissue distribution, expressed by the venom gland. Exclusively expressed in the venom thoracic glands (and not in body tissues).

It is found in the secreted. Its function is as follows. May act as a neurotoxin. This chain is U-Asilidin(1)-Mar2a, found in Machimus arthriticus (Breck robberfly).